The following is a 1058-amino-acid chain: Carbamoyl phosphate synthase large chain (1058 aa).

Residues 1 to 399 (MPIDKDIKKV…AIQKAIRSLD (399 aa)) are carboxyphosphate synthetic domain. Positions 127, 167, 173, 174, 206, 208, 213, 239, 240, 241, 282, and 296 each coordinate ATP. Positions 131–325 (GHFMDKLNEP…IAKISSKIAL (195 aa)) constitute an ATP-grasp 1 domain. 3 residues coordinate Mg(2+): Q282, E296, and N298. Positions 282, 296, and 298 each coordinate Mn(2+). The interval 400-538 (MGHDGFEYVE…YSTYDSGNEL (139 aa)) is oligomerization domain. Residues 539–924 (KSSNKKKIVI…YKSQLAAGMD (386 aa)) are carbamoyl phosphate synthetic domain. In terms of domain architecture, ATP-grasp 2 spans 663–856 (AKLLNKLHIH…LAKVATWIMT (194 aa)). Residues R699, K738, L740, E745, G770, V771, H772, S773, Q813, and E827 each contribute to the ATP site. Residues Q813, E827, and N829 each coordinate Mg(2+). Residues Q813, E827, and N829 each coordinate Mn(2+). Residues 923–1058 (MDLPKEGKIF…KSLNEHIDGE (136 aa)) form the MGS-like domain. The interval 925–1058 (LPKEGKIFIS…KSLNEHIDGE (134 aa)) is allosteric domain.

This sequence belongs to the CarB family. As to quaternary structure, composed of two chains; the small (or glutamine) chain promotes the hydrolysis of glutamine to ammonia, which is used by the large (or ammonia) chain to synthesize carbamoyl phosphate. Tetramer of heterodimers (alpha,beta)4. The cofactor is Mg(2+). Mn(2+) serves as cofactor.

It carries out the reaction hydrogencarbonate + L-glutamine + 2 ATP + H2O = carbamoyl phosphate + L-glutamate + 2 ADP + phosphate + 2 H(+). The enzyme catalyses hydrogencarbonate + NH4(+) + 2 ATP = carbamoyl phosphate + 2 ADP + phosphate + 2 H(+). It participates in amino-acid biosynthesis; L-arginine biosynthesis; carbamoyl phosphate from bicarbonate: step 1/1. The protein operates within pyrimidine metabolism; UMP biosynthesis via de novo pathway; (S)-dihydroorotate from bicarbonate: step 1/3. Its function is as follows. Large subunit of the glutamine-dependent carbamoyl phosphate synthetase (CPSase). CPSase catalyzes the formation of carbamoyl phosphate from the ammonia moiety of glutamine, carbonate, and phosphate donated by ATP, constituting the first step of 2 biosynthetic pathways, one leading to arginine and/or urea and the other to pyrimidine nucleotides. The large subunit (synthetase) binds the substrates ammonia (free or transferred from glutamine from the small subunit), hydrogencarbonate and ATP and carries out an ATP-coupled ligase reaction, activating hydrogencarbonate by forming carboxy phosphate which reacts with ammonia to form carbamoyl phosphate. This is Carbamoyl phosphate synthase large chain from Methanobrevibacter smithii (strain ATCC 35061 / DSM 861 / OCM 144 / PS).